Reading from the N-terminus, the 85-residue chain is Large ribosomal subunit protein bL27 (85 aa).

The disordered stretch occupies residues 1–22; the sequence is MAHKKAGGSTNNGRDSESKRLG.

The protein belongs to the bacterial ribosomal protein bL27 family.

In Psychromonas ingrahamii (strain DSM 17664 / CCUG 51855 / 37), this protein is Large ribosomal subunit protein bL27.